We begin with the raw amino-acid sequence, 169 residues long: MAPPWVPAMGFTLAPSLGCFVGSRFVHGEGLRWYAGLQKPSWHPPHWVLGPVWGTLYSAMGYGSYLVWKELGGFTEKAVVPLGLYTGQLALNWAWPPIFFGARQMGWALVDLLLVSGAAAATTVAWYQVSPLAARLLYPYLAWLAFTTTLNYCVWRDNHGWRGGRRLPE.

At 2-5 the chain is on the mitochondrial intermembrane side; it reads APPW. The chain crosses the membrane as a helical span at residues 6 to 26; that stretch reads VPAMGFTLAPSLGCFVGSRFV. Residues 27–46 are Cytoplasmic-facing; the sequence is HGEGLRWYAGLQKPSWHPPH. A helical transmembrane segment spans residues 47–67; sequence WVLGPVWGTLYSAMGYGSYLV. The Mitochondrial intermembrane segment spans residues 68–79; sequence WKELGGFTEKAV. Residues 80-100 traverse the membrane as a helical segment; sequence VPLGLYTGQLALNWAWPPIFF. The Cytoplasmic portion of the chain corresponds to 101-105; it reads GARQM. Residues 106 to 126 form a helical membrane-spanning segment; sequence GWALVDLLLVSGAAAATTVAW. Residues 127–134 are Mitochondrial intermembrane-facing; that stretch reads YQVSPLAA. Residues 135–155 traverse the membrane as a helical segment; sequence RLLYPYLAWLAFTTTLNYCVW. Topologically, residues 156 to 169 are cytoplasmic; that stretch reads RDNHGWRGGRRLPE.

Belongs to the TspO/BZRP family. As to quaternary structure, interacts with TSPOAP1. May interact with STAR. Interacts with MOST-1. Interacts with TMEM97. Forms a complex with TMEM97 and PGRMC1; the interaction occurs in MIA PaCa-2 cells but not in MCF7 cells. As to expression, found in many tissue types. Expressed at the highest levels under normal conditions in tissues that synthesize steroids.

It is found in the mitochondrion membrane. Functionally, can bind protoporphyrin IX and may play a role in the transport of porphyrins and heme. Promotes the transport of cholesterol across mitochondrial membranes and may play a role in lipid metabolism, but its precise physiological role is controversial. It is apparently not required for steroid hormone biosynthesis. Was initially identified as peripheral-type benzodiazepine receptor; can also bind isoquinoline carboxamides. This is Translocator protein (TSPO) from Homo sapiens (Human).